Reading from the N-terminus, the 511-residue chain is Ribose import ATP-binding protein RbsA 3 (511 aa).

ABC transporter domains follow at residues 21-257 (LEMR…VGRD) and 256-511 (RDVE…TGNA). 53–60 (GENGAGKS) contacts ATP.

The protein belongs to the ABC transporter superfamily. Ribose importer (TC 3.A.1.2.1) family. In terms of assembly, the complex is composed of an ATP-binding protein (RbsA), two transmembrane proteins (RbsC) and a solute-binding protein (RbsB).

It localises to the cell inner membrane. The catalysed reaction is D-ribose(out) + ATP + H2O = D-ribose(in) + ADP + phosphate + H(+). Part of the ABC transporter complex RbsABC involved in ribose import. Responsible for energy coupling to the transport system. The chain is Ribose import ATP-binding protein RbsA 3 from Rhizobium etli (strain ATCC 51251 / DSM 11541 / JCM 21823 / NBRC 15573 / CFN 42).